Reading from the N-terminus, the 521-residue chain is Vang-like protein 2 (521 aa).

The tract at residues 1–81 (MDTESQYSGY…TTVVTGTSEH (81 aa)) is disordered. The Cytoplasmic portion of the chain corresponds to 1 to 108 (MDTESQYSGY…VPLDCSRHLG (108 aa)). Basic residues predominate over residues 15–33 (GHSRSSRKHRDRRDRHRSK). Over residues 57 to 67 (ESTRGDERDDN) the composition is skewed to basic and acidic residues. Over residues 69-81 (GETTTVVTGTSEH) the composition is skewed to low complexity. A helical membrane pass occupies residues 109–129 (VAAGAILALLSFLTPLAFLLL). Residues 130–147 (PPLLWREELEPCGTACEG) are Extracellular-facing. The chain crosses the membrane as a helical span at residues 148 to 168 (LFISVAFKLLILLLGSWALFF). Over 169-178 (RRPKASLPRV) the chain is Cytoplasmic. Residues 179-199 (FVLRALLMVLVFLLVISYWLF) form a helical membrane-spanning segment. At 200-217 (YGVRILDARERSYQGVVQ) the chain is on the extracellular side. A helical transmembrane segment spans residues 218 to 238 (FAVSLVDALLFVHYLAVVLLE). Topologically, residues 239–521 (LRQLQPQFTL…VMRLQSETSV (283 aa)) are cytoplasmic.

This sequence belongs to the Vang family. In terms of assembly, homodimer and heterodimer with Vangl1. Interacts through its C-terminal region with the N-terminal half of DVL1, DVL2 and DVL3. The PDZ domain of DVL1, DVL2 and DVL3 is required for the interaction. Variants Glu-255 and Asn-464 impair interaction with the DVL proteins. Also interacts with the PDZ domains of MAGI3, SCRIB/SCRB1 and FZD3. Interacts with PRICKLE3. In terms of tissue distribution, primarily expressed in the brain and epididymis. Not detected in the cochlea of Lp mice.

The protein resides in the cell membrane. Its function is as follows. Involved in the control of early morphogenesis and patterning of both axial midline structures and the development of neural plate. Plays a role in the regulation of planar cell polarity, particularly in the orientation of stereociliary bundles in the cochlea. Required for polarization and movement of myocardializing cells in the outflow tract and seems to act via RHOA signaling to regulate this process. Required for cell surface localization of FZD3 and FZD6 in the inner ear. This chain is Vang-like protein 2 (Vangl2), found in Mus musculus (Mouse).